The chain runs to 658 residues: Translation factor GUF1, mitochondrial (658 aa).

The N-terminal 40 residues, 1 to 40 (MRGCLQTVRWLTSAWQRPPSYPPLSRAAPCRFFNVSIPRN), are a transit peptide targeting the mitochondrion. Residues 60–240 (DRFRNFCIVA…TVVEQIPAPV (181 aa)) enclose the tr-type G domain. Residues 69–76 (AHVDHGKS), 133–137 (DTPGH), and 187–190 (NKVD) each bind GTP.

It belongs to the TRAFAC class translation factor GTPase superfamily. Classic translation factor GTPase family. LepA subfamily.

It localises to the mitochondrion inner membrane. It carries out the reaction GTP + H2O = GDP + phosphate + H(+). Functionally, promotes mitochondrial protein synthesis. May act as a fidelity factor of the translation reaction, by catalyzing a one-codon backward translocation of tRNAs on improperly translocated ribosomes. Binds to mitochondrial ribosomes in a GTP-dependent manner. In Paracoccidioides brasiliensis (strain Pb03), this protein is Translation factor GUF1, mitochondrial.